The chain runs to 475 residues: Ankyrin repeat, SAM and basic leucine zipper domain-containing protein 1 (475 aa).

Positions Met1 to Trp25 are disordered. Phosphoserine occurs at positions 17, 18, and 20. ANK repeat units follow at residues Glu45–Ser74, Tyr78–Phe107, Asp110–Val144, Arg148–Thr177, Asn181–Leu210, and Asp214–Gly243. An SAM domain is found at Ser272–Gln334.

Interacts with DDX4, PIWIL1, RANBP9 and TDRD1.

The protein resides in the cytoplasm. In terms of biological role, plays a central role during spermatogenesis by repressing transposable elements and preventing their mobilization, which is essential for the germline integrity. Acts via the piRNA metabolic process, which mediates the repression of transposable elements during meiosis by forming complexes composed of piRNAs and Piwi proteins and governs the methylation and subsequent repression of transposons. Its association with pi-bodies suggests a participation in the primary piRNAs metabolic process. Required prior to the pachytene stage to facilitate the production of multiple types of piRNAs, including those associated with repeats involved in the regulation of retrotransposons. May act by mediating protein-protein interactions during germ cell maturation. The protein is Ankyrin repeat, SAM and basic leucine zipper domain-containing protein 1 (ASZ1) of Chlorocebus aethiops (Green monkey).